The sequence spans 234 residues: MTILILTDNVHAHALAVDLQARHGDMDVYQSPIGQLPGVPRCDVAERVAEIVERYDLVLSFHCKQRFPAALIDGVRCVNVHPGFNPYNRGWFPQVFSIIDGQKVGVTIHEIDDQLDHGPIIAQRECAIESWDSSGSVYARLMDIERELVLEHFDAIRDGSYTAKSPATEGNLNLKKDFEQLRRLDLNERGTFGHFLNRLRALTHDDFRNAWFVDASGRKVFVRVVLEPEKPAEA.

Residues Asn-9 and 62–64 contribute to the dTDP-4-amino-4,6-dideoxy-alpha-D-glucose site; that span reads HCK. 65–67 is a (6R)-10-formyltetrahydrofolate binding site; the sequence is QRF. His-81 (proton acceptor) is an active-site residue. Position 90–94 (90–94) interacts with dTDP-4-amino-4,6-dideoxy-alpha-D-glucose; sequence GWFPQ. (6R)-10-formyltetrahydrofolate contacts are provided by Asp-112, Asp-116, and Lys-175. Asn-209 serves as a coordination point for dTDP-4-amino-4,6-dideoxy-alpha-D-glucose.

Belongs to the dTDP-Qui4N formyltransferase family. As to quaternary structure, homodimer.

The catalysed reaction is dTDP-4-amino-4,6-dideoxy-alpha-D-glucose + (6R)-10-formyltetrahydrofolate = dTDP-4-formamido-4,6-dideoxy-alpha-D-glucose + (6S)-5,6,7,8-tetrahydrofolate + H(+). Its function is as follows. Sugar N-formyltransferase that catalyzes the conversion of dTDP-4-amino-4,6-dideoxyglucose into dTDP-4-formamido-4,6-dideoxyglucose using N(10)-formyltetrahydrofolate as the carbon source. Plays a role in virulence. This is dTDP-4-amino-4,6-dideoxyglucose formyltransferase from Mycobacterium bovis (strain ATCC BAA-935 / AF2122/97).